The primary structure comprises 320 residues: GTP 3',8-cyclase (320 aa).

In terms of domain architecture, Radical SAM core spans lysine 5–proline 222. Arginine 14 is a binding site for GTP. [4Fe-4S] cluster contacts are provided by cysteine 21, cysteine 25, and cysteine 28. Arginine 65 serves as a coordination point for GTP. Glycine 69 provides a ligand contact to S-adenosyl-L-methionine. Threonine 96 serves as a coordination point for GTP. Serine 120 is an S-adenosyl-L-methionine binding site. Lysine 157 is a binding site for GTP. Methionine 191 is a binding site for S-adenosyl-L-methionine. Residues cysteine 253 and cysteine 256 each contribute to the [4Fe-4S] cluster site. Arginine 258–arginine 260 is a binding site for GTP. Cysteine 270 contributes to the [4Fe-4S] cluster binding site.

This sequence belongs to the radical SAM superfamily. MoaA family. In terms of assembly, monomer and homodimer. [4Fe-4S] cluster serves as cofactor.

The catalysed reaction is GTP + AH2 + S-adenosyl-L-methionine = (8S)-3',8-cyclo-7,8-dihydroguanosine 5'-triphosphate + 5'-deoxyadenosine + L-methionine + A + H(+). The protein operates within cofactor biosynthesis; molybdopterin biosynthesis. Catalyzes the cyclization of GTP to (8S)-3',8-cyclo-7,8-dihydroguanosine 5'-triphosphate. This chain is GTP 3',8-cyclase, found in Aquifex aeolicus (strain VF5).